The primary structure comprises 131 residues: Profilin-1 (131 aa).

It belongs to the profilin family. Occurs in many kinds of cells as a complex with monomeric actin in a 1:1 ratio.

Its subcellular location is the cytoplasm. The protein resides in the cytoskeleton. In terms of biological role, binds to actin and affects the structure of the cytoskeleton. At high concentrations, profilin prevents the polymerization of actin, whereas it enhances it at low concentrations. By binding to PIP2, it inhibits the formation of IP3 and DG. This chain is Profilin-1 (PRO1), found in Ricinus communis (Castor bean).